Consider the following 372-residue polypeptide: Peroxisomal biogenesis factor 3 (372 aa).

Over 1–15 the chain is Cytoplasmic; it reads MLRSMWNFLKRHKKK. Residues 1–45 are targeting to peroxisomes; the sequence is MLRSMWNFLKRHKKKCIFLGTVLGGVYILGKYGQKKLREIQEREA. The chain crosses the membrane as a helical span at residues 16-36; sequence CIFLGTVLGGVYILGKYGQKK. At 37-116 the chain is on the peroxisomal side; it reads LREIQEREAA…LKIISFTRSI (80 aa). The chain crosses the membrane as a helical span at residues 117–140; sequence VAVYSTCMLVVLLRVQLNIIGGYI. The interaction with PEX19 stretch occupies residues 120–136; the sequence is YSTCMLVVLLRVQLNII. Topologically, residues 141–372 are cytoplasmic; that stretch reads YLDNATVGKN…AFSTPQQLEK (232 aa).

The protein belongs to the peroxin-3 family. In terms of assembly, interacts with PEX19.

It localises to the peroxisome membrane. Involved in peroxisome biosynthesis and integrity. Assembles membrane vesicles before the matrix proteins are translocated. As a docking factor for PEX19, is necessary for the import of peroxisomal membrane proteins in the peroxisomes. This is Peroxisomal biogenesis factor 3 (Pex3) from Rattus norvegicus (Rat).